We begin with the raw amino-acid sequence, 102 residues long: Small ribosomal subunit protein bS20 (102 aa).

The protein belongs to the bacterial ribosomal protein bS20 family.

Binds directly to 16S ribosomal RNA. The sequence is that of Small ribosomal subunit protein bS20 from Synechococcus sp. (strain WH7803).